The primary structure comprises 178 residues: MTDYKNKLINLLKENNVIKFGKFTLSSGRESDYYVDMKKAITEPEILDCVAHLITNEIEHDNIDKIAGPALGAVPIATATSLISKKPMLMIRKAKKTYGTSKQIEGELLENDDVVIVEDVTTTGGSLLKAINVIEDNGGNIVKAFVIVDREEGAQETFKENNIEFTPLLTISEFKKYL.

Residues Arg92, Lys93, Lys96, and 118–126 each bind 5-phospho-alpha-D-ribose 1-diphosphate; that span reads EDVTTTGGS. Orotate contacts are provided by Thr122 and Arg150.

Belongs to the purine/pyrimidine phosphoribosyltransferase family. PyrE subfamily. In terms of assembly, homodimer. The cofactor is Mg(2+).

The catalysed reaction is orotidine 5'-phosphate + diphosphate = orotate + 5-phospho-alpha-D-ribose 1-diphosphate. It functions in the pathway pyrimidine metabolism; UMP biosynthesis via de novo pathway; UMP from orotate: step 1/2. Its function is as follows. Catalyzes the transfer of a ribosyl phosphate group from 5-phosphoribose 1-diphosphate to orotate, leading to the formation of orotidine monophosphate (OMP). The sequence is that of Orotate phosphoribosyltransferase from Methanosphaera stadtmanae (strain ATCC 43021 / DSM 3091 / JCM 11832 / MCB-3).